The sequence spans 53 residues: Conotoxin Cal9.2e (53 aa).

Residues 1–6 constitute a propeptide that is removed on maturation; it reads KKGVTQ. Cystine bridges form between Cys15–Cys32, Cys20–Cys42, and Cys22–Cys47.

In terms of tissue distribution, expressed by the venom duct.

The protein localises to the secreted. Its function is as follows. Probable neurotoxin with unknown target. Possibly targets ion channels. This chain is Conotoxin Cal9.2e, found in Californiconus californicus (California cone).